We begin with the raw amino-acid sequence, 245 residues long: Ribonuclease 3 (245 aa).

An RNase III domain is found at 19-148; it reads FRAFQQKLGI…FIGALYLDQG (130 aa). Residue Glu-61 participates in Mg(2+) binding. Asp-65 is an active-site residue. Asp-134 and Glu-137 together coordinate Mg(2+). Glu-137 is an active-site residue. The 70-residue stretch at 174–243 folds into the DRBM domain; that stretch reads DYKSQLQELI…AAEALRKLKE (70 aa).

The protein belongs to the ribonuclease III family. Homodimer. Mg(2+) serves as cofactor.

The protein resides in the cytoplasm. It catalyses the reaction Endonucleolytic cleavage to 5'-phosphomonoester.. In terms of biological role, digests double-stranded RNA. Involved in the processing of primary rRNA transcript to yield the immediate precursors to the large and small rRNAs (23S and 16S). Processes some mRNAs, and tRNAs when they are encoded in the rRNA operon. Processes pre-crRNA and tracrRNA of type II CRISPR loci if present in the organism. This chain is Ribonuclease 3, found in Bacillus cytotoxicus (strain DSM 22905 / CIP 110041 / 391-98 / NVH 391-98).